A 423-amino-acid polypeptide reads, in one-letter code: Serine--tRNA ligase (423 aa).

An L-serine-binding site is contributed by 231 to 233; it reads TAE. Residue 262–264 coordinates ATP; it reads RSE. Glutamate 285 serves as a coordination point for L-serine. 349-352 provides a ligand contact to ATP; the sequence is EISS. Residue serine 384 participates in L-serine binding.

Belongs to the class-II aminoacyl-tRNA synthetase family. Type-1 seryl-tRNA synthetase subfamily. As to quaternary structure, homodimer. The tRNA molecule binds across the dimer.

Its subcellular location is the cytoplasm. The enzyme catalyses tRNA(Ser) + L-serine + ATP = L-seryl-tRNA(Ser) + AMP + diphosphate + H(+). The catalysed reaction is tRNA(Sec) + L-serine + ATP = L-seryl-tRNA(Sec) + AMP + diphosphate + H(+). Its pathway is aminoacyl-tRNA biosynthesis; selenocysteinyl-tRNA(Sec) biosynthesis; L-seryl-tRNA(Sec) from L-serine and tRNA(Sec): step 1/1. In terms of biological role, catalyzes the attachment of serine to tRNA(Ser). Is also able to aminoacylate tRNA(Sec) with serine, to form the misacylated tRNA L-seryl-tRNA(Sec), which will be further converted into selenocysteinyl-tRNA(Sec). The polypeptide is Serine--tRNA ligase (Acinetobacter baylyi (strain ATCC 33305 / BD413 / ADP1)).